We begin with the raw amino-acid sequence, 169 residues long: EP300-interacting inhibitor of differentiation 1 (169 aa).

Positions 31-50 (GRGARGPAPEEGPMEEEAGP) are disordered. Residues 54-120 (RAQRGLFPEA…AGDALDGGFQ (67 aa)) form an interaction with NR0B2 region. An LXCXE motif motif is present at residues 150–154 (LGCDE).

As to quaternary structure, interacts via its LXCXE motif with the entire pocket region of RB1. Interacts with EP300, NR0B2 and TRIM27. In terms of tissue distribution, expressed in all adult tissues examined and during embryogenesis.

The protein localises to the nucleus. It is found in the cytoplasm. In terms of biological role, interacts with RB1 and EP300 and acts as a repressor of MYOD1 transactivation. Inhibits EP300 and CBP histone acetyltransferase activity. May be involved in coupling cell cycle exit to the transcriptional activation of genes required for cellular differentiation. May act as a candidate coinhibitory factor for NR0B2 that can be directly linked to transcription inhibitory mechanisms. The polypeptide is EP300-interacting inhibitor of differentiation 1 (Mus musculus (Mouse)).